The primary structure comprises 464 residues: Secretion-regulating guanine nucleotide exchange factor (464 aa).

RCC1 repeat units lie at residues 14–66, 68–118, 119–170, 172–229, 230–282, 283–349, and 350–401; these read AAAL…VVTD, GSLF…ILTE, NGQV…AATA, GTVF…SLTD, AGEL…AQTV, TGKV…LAVI, and GGVC…ALCQ. The segment covering 301–313 has biased composition (basic and acidic residues); the sequence is VETREGWESEKQD. A disordered region spans residues 301-323; sequence VETREGWESEKQDPSLPGSGPQK. Residues 411 to 464 form a disordered region; sequence HPSVTSPSPDATKEARSQEAMEQERNQKERHAETSPQAQSDRFRNGGLVAETLE. Over residues 421–443 the composition is skewed to basic and acidic residues; it reads ATKEARSQEAMEQERNQKERHAE. The residue at position 427 (S427) is a Phosphoserine.

As to quaternary structure, interacts with SEC5. The interaction occurs only in the presence of magnesium or manganese and is stimulated by dCTP or GTP.

Its subcellular location is the cytoplasm. It is found in the nucleus. In terms of biological role, probable guanine nucleotide exchange factor (GEF), which may be involved in the secretion process. The protein is Secretion-regulating guanine nucleotide exchange factor (SERGEF) of Bos taurus (Bovine).